Here is a 282-residue protein sequence, read N- to C-terminus: Bifunctional protein FolD (282 aa).

NADP(+) contacts are provided by residues 166–168 and serine 191; that span reads GRS.

It belongs to the tetrahydrofolate dehydrogenase/cyclohydrolase family. As to quaternary structure, homodimer.

The catalysed reaction is (6R)-5,10-methylene-5,6,7,8-tetrahydrofolate + NADP(+) = (6R)-5,10-methenyltetrahydrofolate + NADPH. It catalyses the reaction (6R)-5,10-methenyltetrahydrofolate + H2O = (6R)-10-formyltetrahydrofolate + H(+). It participates in one-carbon metabolism; tetrahydrofolate interconversion. Functionally, catalyzes the oxidation of 5,10-methylenetetrahydrofolate to 5,10-methenyltetrahydrofolate and then the hydrolysis of 5,10-methenyltetrahydrofolate to 10-formyltetrahydrofolate. This Acidovorax ebreus (strain TPSY) (Diaphorobacter sp. (strain TPSY)) protein is Bifunctional protein FolD.